The primary structure comprises 381 residues: Adenylate cyclase (381 aa).

The interval 1 to 30 is disordered; it reads MTVDDTGSGADGDGRVDPEPAPDSADPGED. One can recognise a Guanylate cyclase domain in the interval 191–300; the sequence is AVGFADLVGF…TTVNLASRLT (110 aa). Positions 196 and 240 each coordinate Mg(2+).

Belongs to the adenylyl cyclase class-3 family. Mg(2+) serves as cofactor.

It catalyses the reaction ATP = 3',5'-cyclic AMP + diphosphate. The sequence is that of Adenylate cyclase (cya) from Streptomyces coelicolor (strain ATCC BAA-471 / A3(2) / M145).